Here is a 144-residue protein sequence, read N- to C-terminus: Probable transcription termination protein NusA (144 aa).

Residues 101–144 (RTDIVVGVKPEEIGKVIGKEGKNIKLFKDAVSRYFNVNSISVKQ) form the KH domain.

It belongs to the NusA family.

Its subcellular location is the cytoplasm. Functionally, participates in transcription termination. This chain is Probable transcription termination protein NusA, found in Thermoplasma acidophilum (strain ATCC 25905 / DSM 1728 / JCM 9062 / NBRC 15155 / AMRC-C165).